The sequence spans 508 residues: Light-independent protochlorophyllide reductase subunit B (508 aa).

D36 provides a ligand contact to [4Fe-4S] cluster. Catalysis depends on D294, which acts as the Proton donor. Position 429 to 430 (429 to 430) interacts with substrate; it reads GM.

The protein belongs to the ChlB/BchB/BchZ family. Protochlorophyllide reductase is composed of three subunits; ChlL, ChlN and ChlB. Forms a heterotetramer of two ChlB and two ChlN subunits. [4Fe-4S] cluster serves as cofactor.

The enzyme catalyses chlorophyllide a + oxidized 2[4Fe-4S]-[ferredoxin] + 2 ADP + 2 phosphate = protochlorophyllide a + reduced 2[4Fe-4S]-[ferredoxin] + 2 ATP + 2 H2O. Its pathway is porphyrin-containing compound metabolism; chlorophyll biosynthesis (light-independent). In terms of biological role, component of the dark-operative protochlorophyllide reductase (DPOR) that uses Mg-ATP and reduced ferredoxin to reduce ring D of protochlorophyllide (Pchlide) to form chlorophyllide a (Chlide). This reaction is light-independent. The NB-protein (ChlN-ChlB) is the catalytic component of the complex. The sequence is that of Light-independent protochlorophyllide reductase subunit B from Nostoc punctiforme (strain ATCC 29133 / PCC 73102).